The following is a 227-amino-acid chain: Cytochrome c oxidase subunit 2 (227 aa).

Topologically, residues 1–14 (MAYPFQLGLQDATS) are mitochondrial intermembrane. A helical transmembrane segment spans residues 15-45 (PIMEELTNFHDHTLMIVFLISSLVLYIISLM). Topologically, residues 46–59 (LTTKLTHTSTMDAQ) are mitochondrial matrix. Residues 60–87 (EVETIWTILPAAILVLIALPSLRILYMM) traverse the membrane as a helical segment. The Mitochondrial intermembrane segment spans residues 88–227 (DEINNPVLTV…HFENWSASMV (140 aa)). The Cu cation site is built by His-161, Cys-196, Glu-198, Cys-200, His-204, and Met-207. Glu-198 contacts Mg(2+).

It belongs to the cytochrome c oxidase subunit 2 family. In terms of assembly, component of the cytochrome c oxidase (complex IV, CIV), a multisubunit enzyme composed of 14 subunits. The complex is composed of a catalytic core of 3 subunits MT-CO1, MT-CO2 and MT-CO3, encoded in the mitochondrial DNA, and 11 supernumerary subunits COX4I, COX5A, COX5B, COX6A, COX6B, COX6C, COX7A, COX7B, COX7C, COX8 and NDUFA4, which are encoded in the nuclear genome. The complex exists as a monomer or a dimer and forms supercomplexes (SCs) in the inner mitochondrial membrane with NADH-ubiquinone oxidoreductase (complex I, CI) and ubiquinol-cytochrome c oxidoreductase (cytochrome b-c1 complex, complex III, CIII), resulting in different assemblies (supercomplex SCI(1)III(2)IV(1) and megacomplex MCI(2)III(2)IV(2)). Found in a complex with TMEM177, COA6, COX18, COX20, SCO1 and SCO2. Interacts with TMEM177 in a COX20-dependent manner. Interacts with COX20. Interacts with COX16. Cu cation is required as a cofactor.

It is found in the mitochondrion inner membrane. The enzyme catalyses 4 Fe(II)-[cytochrome c] + O2 + 8 H(+)(in) = 4 Fe(III)-[cytochrome c] + 2 H2O + 4 H(+)(out). Component of the cytochrome c oxidase, the last enzyme in the mitochondrial electron transport chain which drives oxidative phosphorylation. The respiratory chain contains 3 multisubunit complexes succinate dehydrogenase (complex II, CII), ubiquinol-cytochrome c oxidoreductase (cytochrome b-c1 complex, complex III, CIII) and cytochrome c oxidase (complex IV, CIV), that cooperate to transfer electrons derived from NADH and succinate to molecular oxygen, creating an electrochemical gradient over the inner membrane that drives transmembrane transport and the ATP synthase. Cytochrome c oxidase is the component of the respiratory chain that catalyzes the reduction of oxygen to water. Electrons originating from reduced cytochrome c in the intermembrane space (IMS) are transferred via the dinuclear copper A center (CU(A)) of subunit 2 and heme A of subunit 1 to the active site in subunit 1, a binuclear center (BNC) formed by heme A3 and copper B (CU(B)). The BNC reduces molecular oxygen to 2 water molecules using 4 electrons from cytochrome c in the IMS and 4 protons from the mitochondrial matrix. This Uromys caudimaculatus (Giant white-tailed rat) protein is Cytochrome c oxidase subunit 2 (MT-CO2).